The sequence spans 510 residues: ATP synthase subunit alpha (510 aa).

169-176 (GDRQTGKT) contacts ATP.

Belongs to the ATPase alpha/beta chains family. In terms of assembly, F-type ATPases have 2 components, CF(1) - the catalytic core - and CF(0) - the membrane proton channel. CF(1) has five subunits: alpha(3), beta(3), gamma(1), delta(1), epsilon(1). CF(0) has three main subunits: a(1), b(2) and c(9-12). The alpha and beta chains form an alternating ring which encloses part of the gamma chain. CF(1) is attached to CF(0) by a central stalk formed by the gamma and epsilon chains, while a peripheral stalk is formed by the delta and b chains.

The protein localises to the cell inner membrane. The enzyme catalyses ATP + H2O + 4 H(+)(in) = ADP + phosphate + 5 H(+)(out). Produces ATP from ADP in the presence of a proton gradient across the membrane. The alpha chain is a regulatory subunit. The chain is ATP synthase subunit alpha from Afipia carboxidovorans (strain ATCC 49405 / DSM 1227 / KCTC 32145 / OM5) (Oligotropha carboxidovorans).